A 467-amino-acid polypeptide reads, in one-letter code: Argininosuccinate lyase (467 aa).

It belongs to the lyase 1 family. Argininosuccinate lyase subfamily.

Its subcellular location is the cytoplasm. The catalysed reaction is 2-(N(omega)-L-arginino)succinate = fumarate + L-arginine. Its pathway is amino-acid biosynthesis; L-arginine biosynthesis; L-arginine from L-ornithine and carbamoyl phosphate: step 3/3. The chain is Argininosuccinate lyase from Allorhizobium ampelinum (strain ATCC BAA-846 / DSM 112012 / S4) (Agrobacterium vitis (strain S4)).